The following is a 1966-amino-acid chain: MGNTVGAPIVSEYLEDEIGPIVFKKSLGNARFLKTVKAYHSEEGYVVVKIYKKRNTKESLEKYKIMLKEIKDNFNITPSFNIMPYQHFIETDRSGYLIRQYFHNNLYDRLSTRPFLSMIEKKFIAFQLLKALEQSSFKGVFHGDIKSENVLVTTSNWVYLSDFACYKPTFIPEDNPADFSFYFDTSGRRTCYIAPERFYETNRGAPSNNELTPKMDIFSLGCVIAELFLDGFPIFDFSQLLSYRKGEYSPEPIIRQRIQDPNIQTLILHMIQKDPDQRYTPEKYISKWNTVFPQYFSFAHQFIPELMRLENDDRVMCISDKFDEIVDIFKNNSITNLFKSNLNQSTNSNTIGSFRVSTPSSPILISNNNNNNNNNNNNNNNNNNNNNNNNNNNNNNNNNQTTTTTTNTNINTTQQQQQQQQQQQQQLQRPLSKLDDIGKNIANIIYKTEQFVKESDEFDKTDITNIKELNIQTTPTINTSTINRVIQTSKTNTNLDTINENSNNNIGVNRKKVTVVEGLDLFLSVIYTAVKHCQFPSTKVKCVGSLLVRLAEMLDDECRLQKIVPYIMSMISPEQPTLVRVEALRSLAKVLEMVQTFPPSESSIFGQYILPSLSQLSHESTDEIIRIAFAEILPQLATTAKRFLEIAQHYRDPDSEGIMESRKDRAKFRVYDSDLQEVQDQFFNKVSDLLTKDSCNTLKKIILSDIYRLCVFFGRQKTNESVLPLIITFLNDRDWQLRCAFFENIVAVCTVVGAGSLESFIYPCILLALTDEEEFVTEKALSSLSELCSLGLLRKPILLELLVKTSPMLLHPNNWIRYGVVSLIVKICQSLSKADVYCYVKPKLSPFLVNLNGNGNGNAEISDTITESNLIQLLDSPISRESFNKIVKFIARNRINLSSSINSILANDNDNFNGESFNSNGSGGGGNPNLVSSTGGSNRRLRALSNKFFVPNILSASNSSINSTSGDIGSLLSQSTEESLAFLRQMTSIGISDSDQNKIIKCFDYLQSKKCKDLESANNSEGNVIVIRTNGTTIISSSNNSNNNTLSSSTTSSNSTTPTNSTVNLHSVLNNTTIIQQQQQQLQQTITQQSITQQQQQQQQQQQVSGGITTGGTTTTTLGRSSSPQLTGLNPSILSNSNNIQLSSSVVDVTKLPNSIPIRMVKIRGGDQSLNNSTVSLGSVAGGNIITPSTSLSNSNTMVGNNNNNSYNTSTSSSPLSSSVLNSSVGMNNLTNSNANSINNSSGINNNNSNNNSVNSNNYNNMNNNTMNNSVNLMNSNQIGQQQQQNPNTVKIDLVSPSDLNVVSKKYYIRDPKMGLSTILKVETNVECSIKVPLPLPDLGSTDSVLGGGLLSSGGVGGGVGGTGGGNINGVSGINGNVGGGGGGVGVGTVGSGGNGSIGGGNSGINNGSGGGGVNSGGNSGINSGSTNSSGSLYGNGNGLDNLPNSTWRPMGILVSHFFEHKAAVNEIQVSSDNLFFATASNDGTVKIWDCQRMEKSVTNRARQTYAQQEGRITSISICEKTHSIASASDKGSIHVFRVGISGKQKNGNIKYTNLSTVKNITETTRGNIVSVSHYSTNSSSVVTYATTKGGIHGWDLRSQQDAFNLVNDASLGLIQAFLIDPNRNWLVTGTSRGFLTCWDLRFGIPLYSVRVSNGRILKFAPYMLAKSASESWVYISTEQDNVIVFDLSNKKTTRVFKRSYEQPPQQQPQQPQPPQQQQQQQSQMNRSINMTSSTTTTTTSSYDFGTENLKTSSYSQLPSNPLVNSIVNNSNINNNNNNNDNSNNVTIFKPTPLVRALLNPPNCPFLITAGDDKRIKLWDWNNLPQSYYVSIGKEPPPFYTHKFSNDTSNAYEIHEEVWHDTSSSSFYSNSAMFGGGGGGQPMSTSLSSSSLSQQQHQAQLQLQYQLQQQQQQQQYINHLQQQKSKTSISMPTVHHQEPILDIKMMEVPNPMLISASTDGVVKVWK.

One can recognise a Protein kinase domain in the interval 21 to 303; that stretch reads IVFKKSLGNA…QYFSFAHQFI (283 aa). Residues 27-35 and Lys-49 each bind ATP; that span reads LGNARFLKT. Catalysis depends on Asp-144, which acts as the Proton acceptor. A disordered region spans residues 362 to 407; it reads PILISNNNNNNNNNNNNNNNNNNNNNNNNNNNNNNNNNQTTTTTTN. Positions 367–407 are enriched in low complexity; it reads NNNNNNNNNNNNNNNNNNNNNNNNNNNNNNNNNQTTTTTTN. HEAT repeat units lie at residues 558–596, 604–642, 717–754, and 756–793; these read CRLQ…MVQT, IFGQ…TAKR, KTNE…VVGA, and SLES…LGLL. Disordered stretches follow at residues 916–937, 1036–1062, 1106–1130, and 1190–1263; these read SFNS…TGGS, SSSN…TNST, GGIT…TGLN, and TSLS…NNMN. 2 stretches are compositionally biased toward low complexity: residues 1106–1119 and 1192–1263; these read GGIT…TTLG and LSNS…NNMN. WD repeat units follow at residues 1460-1499, 1508-1547, 1564-1605, and 1610-1649; these read EHKA…KSVT, QQEG…KQKN, TTRG…DAFN, and ASLG…PLYS. The interval 1699–1743 is disordered; sequence RSYEQPPQQQPQQPQPPQQQQQQQSQMNRSINMTSSTTTTTTSSY. Composition is skewed to low complexity over residues 1703–1722 and 1732–1742; these read QPPQ…QQQQ and TSSTTTTTTSS. 2 WD repeats span residues 1790–1829 and 1935–1966; these read KPTP…QSYY and HHQE…KVWK.

Belongs to the protein kinase superfamily. Ser/Thr protein kinase family.

The catalysed reaction is L-seryl-[protein] + ATP = O-phospho-L-seryl-[protein] + ADP + H(+). The enzyme catalyses L-threonyl-[protein] + ATP = O-phospho-L-threonyl-[protein] + ADP + H(+). This chain is Probable serine/threonine-protein kinase vps15 (vps15), found in Dictyostelium discoideum (Social amoeba).